Consider the following 361-residue polypeptide: DNA polymerase subunit gamma-2, mitochondrial (361 aa).

The transit peptide at 1 to 18 directs the protein to the mitochondrion; it reads MSRIQRCFKSLASAGFFR.

In terms of assembly, component of the DNA polymerase gamma complex consisting of two subunits: the catalytic subunit DNApol-gamma/DNApolG1 and the accessory subunit PolG2/DNApol-gamma35. As to expression, expressed in ovaries (at protein level).

The protein localises to the mitochondrion. In terms of biological role, as accessory component of the DNA polymerase gamma complex is involved in the replication of mitochondrial DNA. Does not bind DNA. Essential for mitochondrial DNA maintenance and larval development. The polypeptide is DNA polymerase subunit gamma-2, mitochondrial (Drosophila melanogaster (Fruit fly)).